Here is a 258-residue protein sequence, read N- to C-terminus: MSDQLKIADKTFTSRLFTGTGKFATGEEMFHALQASGSELVTVALRRIDIDGQEDDILKWLKKGNFNLLPNTSGARNAKEAVFAATLAREALGTNWLKLEIHPDPKYLMPDPIETLKAAEELVKAGFVVLPYIHADPVLCKRLEEVGCAAVMPLGSPIGSNKGLRTRDFLEIIIEQSNVPVIVDAGIGAPSQAAEAMELGAAAVLVNTAMAVAGDTKAMGKAFGMAVEAGRMAHLAKLAPVSNAAHASSPLLSFLNDL.

Residue K98 is the Schiff-base intermediate with DXP of the active site. 1-deoxy-D-xylulose 5-phosphate contacts are provided by residues G159, 185–186 (AG), and 207–208 (NT).

It belongs to the ThiG family. Homotetramer. Forms heterodimers with either ThiH or ThiS.

Its subcellular location is the cytoplasm. It carries out the reaction [ThiS sulfur-carrier protein]-C-terminal-Gly-aminoethanethioate + 2-iminoacetate + 1-deoxy-D-xylulose 5-phosphate = [ThiS sulfur-carrier protein]-C-terminal Gly-Gly + 2-[(2R,5Z)-2-carboxy-4-methylthiazol-5(2H)-ylidene]ethyl phosphate + 2 H2O + H(+). Its pathway is cofactor biosynthesis; thiamine diphosphate biosynthesis. Functionally, catalyzes the rearrangement of 1-deoxy-D-xylulose 5-phosphate (DXP) to produce the thiazole phosphate moiety of thiamine. Sulfur is provided by the thiocarboxylate moiety of the carrier protein ThiS. In vitro, sulfur can be provided by H(2)S. The chain is Thiazole synthase from Cytophaga hutchinsonii (strain ATCC 33406 / DSM 1761 / CIP 103989 / NBRC 15051 / NCIMB 9469 / D465).